The chain runs to 550 residues: Spermatogenesis-associated protein 2 (550 aa).

The 74-residue stretch at 83-156 (TVGTAFATLE…YNVRDHPGGA (74 aa)) folds into the PUB domain. The short motif at 320–337 (YHLSSLDEVDLYTERGLG) is the PIM motif element. Residues 457–480 (SKPVGSGPSPVGSLVSSGSSSSGG) form a disordered region.

The protein belongs to the SPATA2 family.

It is found in the cytoplasm. Its subcellular location is the nucleus. Its function is as follows. Bridging factor that mediates the recruitment of cyld to the LUBAC complex, thereby regulating TNF-alpha-induced necroptosis. Required to activate the 'Met-1'- (linear) and 'Lys-63'-linked deubiquitinase activities of cyld. The protein is Spermatogenesis-associated protein 2 of Danio rerio (Zebrafish).